An 842-amino-acid chain; its full sequence is ATP-binding cassette sub-family B member 6 (842 aa).

The Lumenal portion of the chain corresponds to 1 to 26 (MVTVGNYCETEGPAGPAWTQNGLSPC). The required for the lysosomal targeting stretch occupies residues 1–205 (MVTVGNYCET…SGGLFILGLW (205 aa)). Residues 1–236 (MVTVGNYCET…GNQGRSTDRR (236 aa)) are required for ATPase activity. Cysteine 8 and cysteine 26 form a disulfide bridge. A helical membrane pass occupies residues 27 to 47 (FFFTLVPSTLLTLGVLALVLV). The Cytoplasmic segment spans residues 48–72 (LPRRRREVPAGPEELSWAAGPRVAP). The chain crosses the membrane as a helical span at residues 73-93 (YVLQLFLATLQMALPLAGLAG). Topologically, residues 94–106 (RVGTARGVRLPGY) are lumenal. The helical transmembrane segment at 107–127 (LLLASVLESLASVCGLWLLVV) threads the bilayer. Residues 128–147 (ERSQARQSLAMGVWMKFRHS) lie on the Cytoplasmic side of the membrane. The chain crosses the membrane as a helical span at residues 148 to 168 (LGLLLLWTVTFAAENLALVSW). The Lumenal segment spans residues 169–185 (NSPQWWWARADLGQQVQ). Residues 186 to 206 (FGLWVLRYVTSGGLFILGLWA) form a helical membrane-spanning segment. Residues 207–263 (PGLRPQSYTLHVHEEDQDVGGNQGRSTDRRSTWRDLGRKLRLLSSYLWPRGSPSLQL) are Cytoplasmic-facing. The helical transmembrane segment at 264–284 (IVLICLGLMGLERALNVLVPI) threads the bilayer. The 292-residue stretch at 265–556 (VLICLGLMGL…FGTYYRMIQT (292 aa)) folds into the ABC transmembrane type-1 domain. Topologically, residues 285-291 (FYRDIVN) are lumenal. The chain crosses the membrane as a helical span at residues 292–312 (LLTAKAPWSSLAWTVTTYVFL). The Cytoplasmic portion of the chain corresponds to 313–375 (KFLQGGGTGS…TGEVLRIVDR (63 aa)). The helical transmembrane segment at 376-396 (GTSSVTGLLSYLVFSIIPTLA) threads the bilayer. Aspartate 397 is a topological domain (lumenal). Residues 398–418 (IIIGIIYFSMFFNAWFGLIVF) form a helical membrane-spanning segment. The Cytoplasmic portion of the chain corresponds to 419-499 (LCMSLYLILT…STASLVVLNQ (81 aa)). Residues 500–520 (TQNLVIGLGLLAGSLLCAYFV) traverse the membrane as a helical segment. Residues 521–529 (SEQKLQVGD) are Lumenal-facing. A helical transmembrane segment spans residues 530–550 (FVLFGTYITQLYMPLNWFGTY). The Cytoplasmic segment spans residues 551-842 (YRMIQTNFID…PEESKPQDTA (292 aa)). Residues 590–824 (IEFENVHFSY…GGVYAEMWQL (235 aa)) enclose the ABC transporter domain. Residues tyrosine 599 and 623–634 (GPSGAGKSTILR) each bind ATP.

It belongs to the ABC transporter superfamily. ABCB family. Heavy Metal importer (TC 3.A.1.210) subfamily. In terms of assembly, homodimer. In terms of processing, N-glycosylated.

It is found in the cell membrane. It localises to the mitochondrion outer membrane. The protein localises to the endoplasmic reticulum membrane. The protein resides in the golgi apparatus membrane. Its subcellular location is the endosome membrane. It is found in the lysosome membrane. It localises to the late endosome membrane. The protein localises to the early endosome membrane. The protein resides in the secreted. Its subcellular location is the extracellular exosome. It is found in the mitochondrion. It localises to the endosome. The protein localises to the multivesicular body membrane. The protein resides in the melanosome membrane. The enzyme catalyses coproporphyrin III(in) + ATP + H2O = coproporphyrin III(out) + ADP + phosphate + H(+). The catalysed reaction is coproporphyrinogen III(in) + ATP + H2O = coproporphyrinogen III(out) + ADP + phosphate + H(+). It catalyses the reaction heme b(in) + ATP + H2O = heme b(out) + ADP + phosphate + H(+). It carries out the reaction pheophorbide a(in) + ATP + H2O = pheophorbide a(out) + ADP + phosphate + H(+). The enzyme catalyses protoporphyrin IX(in) + ATP + H2O = protoporphyrin IX(out) + ADP + phosphate + H(+). The catalysed reaction is coproporphyrin I(in) + ATP + H2O = coproporphyrin I(out) + ADP + phosphate + H(+). It catalyses the reaction uroporphyrin I(in) + ATP + H2O = uroporphyrin I(out) + ADP + phosphate + H(+). It carries out the reaction uroporphyrin III(in) + ATP + H2O = uroporphyrin III(out) + ADP + phosphate + H(+). Functionally, ATP-dependent transporter that catalyzes the transport of a broad-spectrum of porphyrins from the cytoplasm to the extracellular space through the plasma membrane or into the vesicle lumen. May also function as an ATP-dependent importer of porphyrins from the cytoplasm into the mitochondria, in turn may participate in the de novo heme biosynthesis regulation and in the coordination of heme and iron homeostasis during phenylhydrazine stress. May play a key role in the early steps of melanogenesis producing PMEL amyloid fibrils. In vitro, it confers to cells a resistance to toxic metal such as arsenic and cadmium and against chemotherapeutics agent such as 5-fluorouracil, SN-38 and vincristin. In addition may play a role in the transition metal homeostasis. The polypeptide is ATP-binding cassette sub-family B member 6 (Mus musculus (Mouse)).